The primary structure comprises 692 residues: MSKTRVYELAKELNLSSKDLISKLNDLDIKVKNHMSTLEDEEVELIMDLLRDKPQQTEEVHQKEEEDIFEDNLEDIEEERVYKKSFKKGSKKNKKNNKKAVLTEEKEEDEIKIITIPEFLTVKELAEKMKVNPTEIIKKLIAKGIMVTVNQQIDFENAAKIAEEYGFLVDKEEVKDELEMLLEETPDDEKDLQPRPPIVTVMGHVDHGKTSLLDAIRNTNVTMKEMGGITQHIGASVVEINDKKIVFLDTPGHEAFTAMRARGASITDIVVLVVAADDGVMPQTVEAINHVKAANVPMIVAINKIDLPTANPDRVKTELSELGLVPEEWGGNTICVPVSAKKNIGIDNLLEMILLVAEMEDLKANPNKPARGTIIEAKLEKGKGPVATVIVQNGTLQIGDAILAGTVYGKVRAMLDDKGRRIKKAGPSMPVEVLGFSEVPEAGDKLIVVEDEKKARELAERRKELQKEMELKRKQKVSLEDLFSQIQEGSVKELNIIIKADVQGSVEALKKSIEDLSNEEVRIKVIHGAVGAITETDVMLASASNAIIIGFNVRPETNAKNLAEKEKVDIKLYRIIYEAIEDIKAAMKGLLEPKYKEVELGRAEVRAVFRVPGVGNVAGCYVLSGKILRNSDIRVVRDGIVVYEGKIASLKRFKDDVREVQQGFECGIGIDRFNDIKEGDIIEAYQMEEIPR.

In terms of domain architecture, tr-type G spans 194 to 363; sequence PRPPIVTVMG…LLVAEMEDLK (170 aa). The interval 203–210 is G1; that stretch reads GHVDHGKT. Residue 203-210 participates in GTP binding; the sequence is GHVDHGKT. The segment at 228 to 232 is G2; that stretch reads GITQH. The interval 249-252 is G3; sequence DTPG. GTP-binding positions include 249–253 and 303–306; these read DTPGH and NKID. Positions 303–306 are G4; it reads NKID. The segment at 339–341 is G5; it reads SAK.

It belongs to the TRAFAC class translation factor GTPase superfamily. Classic translation factor GTPase family. IF-2 subfamily.

It is found in the cytoplasm. In terms of biological role, one of the essential components for the initiation of protein synthesis. Protects formylmethionyl-tRNA from spontaneous hydrolysis and promotes its binding to the 30S ribosomal subunits. Also involved in the hydrolysis of GTP during the formation of the 70S ribosomal complex. This Thermoanaerobacter sp. (strain X514) protein is Translation initiation factor IF-2.